Reading from the N-terminus, the 826-residue chain is Capsid-associated protein Vp91 (826 aa).

A signal peptide spans 1–18 (MSDVVLLVLAIIFIIIFV). A C2HC BV-type zinc finger spans residues 147-196 (CVPINPCDTRAPGLYAMDEHLLDALVHSQHLDKDYTINAHLQHPTLYLRC). Cystine bridges form between cysteine 207–cysteine 220 and cysteine 260–cysteine 273. N-linked (GlcNAc...) asparagine; by host glycosylation is present at asparagine 210. The region spanning 223 to 281 (NELCQGRPDGYVLDYFPETLLVNEFVECYESKHVVKQCPEQHVFDRQLMTCVQAHPCAF) is the Chitin-binding type-2 domain. N-linked (GlcNAc...) asparagine; by host glycosylation is found at asparagine 333, asparagine 371, asparagine 413, asparagine 510, asparagine 520, and asparagine 609. The segment at 651-679 (GDGDHWGPDLPPPVQPDSEPDESEPEPEV) is disordered. Residues 668-677 (SEPDESEPEP) show a composition bias toward acidic residues. Asparagine 722 is a glycosylation site (N-linked (GlcNAc...) asparagine; by host).

It is found in the virion. Its function is as follows. Probable capsid-associated protein. The sequence is that of Capsid-associated protein Vp91 from Epiphyas postvittana nucleopolyhedrovirus (EppoMNPV).